The following is a 573-amino-acid chain: F-box/WD repeat-containing protein 5 (573 aa).

An F-box domain is found at 3–49; sequence EGGLPLLPDSLVYQIFLSLGPADVLAAGLVCRQWQAVSRDEFLWKEQ. Residues 90-129 form a WD 1 repeat; that stretch reads EHTDQVLHLSFSHSGYQFASCSKDCTVKIWNNDLTISLLH. Ser-151 carries the post-translational modification Phosphoserine; by PLK4. A D-box motif is present at residues 308-316; the sequence is RRVFDSVLD. WD repeat units lie at residues 470 to 509 and 511 to 551; these read TPND…CLAK and RHED…RVLQ.

This sequence belongs to the FBXW5 family. In terms of assembly, part of the SCF (SKP1-CUL1-F-box) E3 ubiquitin-protein ligase complex SCF(FBXW5) composed of CUL1, SKP1, RBX1 and FBXW5. Component of the DCX(FBXW5) E3 ubiquitin ligase complex, at least composed of (CUL4A or CUL4B), DDB1, FBXW5 and RBX1. Interacts with CDC20, TSC1, TSC2 and SASS6. Interacts with EPS8. Interacts with TNFAIP8L1; TNFAIP8L1 competes with TSC2 to bind FBXW5 increasing TSC2 stability by preventing its ubiquitination. Phosphorylated at Ser-151 by PLK4 during the G1/S transition, leading to inhibit its ability to ubiquitinate SASS6. In terms of processing, ubiquitinated and degraded by the APC/C complex during mitosis and G1 phase. As to expression, widely expressed in adult and embryonal tissues.

It localises to the cytoplasm. It participates in protein modification; protein ubiquitination. Substrate recognition component of both SCF (SKP1-CUL1-F-box protein) and DCX (DDB1-CUL4-X-box) E3 ubiquitin-protein ligase complexes. Substrate-specific adapter of the DCX(FBXW5) E3 ubiquitin-protein ligase complex which mediates the polyubiquitination and subsequent degradation of TSC2. May also act as a negative regulator of MAP3K7/TAK1 signaling in the interleukin-1B (IL1B) signaling pathway. Substrate recognition component of the SCF(FBXW5) E3 ubiquitin-protein ligase complex which mediates the ubiquitination and subsequent proteasomal degradation of SASS6 during S phase, leading to prevent centriole reduplication. The SCF(FBXW5) complex also mediates ubiquitination and degradation of actin-regulator EPS8 during G2 phase, leading to the transient degradation of EPS8 and subsequent cell shape changes required to allow mitotic progression. The sequence is that of F-box/WD repeat-containing protein 5 (Fbxw5) from Mus musculus (Mouse).